The following is a 274-amino-acid chain: Rhamnulose-1-phosphate aldolase (274 aa).

The active site involves Glu-117. Zn(2+) contacts are provided by His-141, His-143, and His-212.

It belongs to the aldolase class II family. RhaD subfamily. As to quaternary structure, homotetramer. It depends on Zn(2+) as a cofactor.

The protein localises to the cytoplasm. The enzyme catalyses L-rhamnulose 1-phosphate = (S)-lactaldehyde + dihydroxyacetone phosphate. The protein operates within carbohydrate degradation; L-rhamnose degradation; glycerone phosphate from L-rhamnose: step 3/3. Its function is as follows. Catalyzes the reversible cleavage of L-rhamnulose-1-phosphate to dihydroxyacetone phosphate (DHAP) and L-lactaldehyde. The protein is Rhamnulose-1-phosphate aldolase of Escherichia fergusonii (strain ATCC 35469 / DSM 13698 / CCUG 18766 / IAM 14443 / JCM 21226 / LMG 7866 / NBRC 102419 / NCTC 12128 / CDC 0568-73).